We begin with the raw amino-acid sequence, 109 residues long: Oncomodulin (109 aa).

S2 carries the N-acetylserine modification. EF-hand domains follow at residues 39-74 and 78-109; these read MSAS…FQSD and LTES…MVHS. Residues D52, D54, S56, Y58, E63, D91, D93, D95, K97, and E102 each coordinate Ca(2+). The disordered stretch occupies residues 82–109; sequence ETKSLMDAADNDGDGKIGADEFQEMVHS. Residues 94–109 are compositionally biased toward basic and acidic residues; it reads GDGKIGADEFQEMVHS.

It belongs to the parvalbumin family. As to expression, found in tumor tissues and not detected in normal tissues.

In terms of biological role, has some calmodulin-like activity with respect to enzyme activation and growth regulation. Binds two calcium ions. In Mus musculus (Mouse), this protein is Oncomodulin (Ocm).